The sequence spans 297 residues: Ribosomal RNA small subunit methyltransferase H (297 aa).

S-adenosyl-L-methionine is bound by residues 37–39 (GGH), Glu-56, Phe-87, Asp-102, and His-109.

It belongs to the methyltransferase superfamily. RsmH family.

The protein resides in the cytoplasm. It carries out the reaction cytidine(1402) in 16S rRNA + S-adenosyl-L-methionine = N(4)-methylcytidine(1402) in 16S rRNA + S-adenosyl-L-homocysteine + H(+). Its function is as follows. Specifically methylates the N4 position of cytidine in position 1402 (C1402) of 16S rRNA. The sequence is that of Ribosomal RNA small subunit methyltransferase H from Borrelia hermsii (strain HS1 / DAH).